The chain runs to 266 residues: ES1 protein homolog, mitochondrial (266 aa).

The transit peptide at 1-39 (MAAVRVLVSPRLASALLPLSGRHRTTSQRAAIHSSAPRP) directs the protein to the mitochondrion. N6-acetyllysine occurs at positions 149, 155, and 162. At lysine 201 the chain carries N6-acetyllysine; alternate. Lysine 201 carries the N6-succinyllysine; alternate modification. The residue at position 217 (lysine 217) is an N6-acetyllysine. 2 positions are modified to N6-acetyllysine; alternate: lysine 221 and lysine 231. Lysine 221 and lysine 231 each carry N6-succinyllysine; alternate.

It belongs to the ES1 family.

Its subcellular location is the mitochondrion. This is ES1 protein homolog, mitochondrial from Rattus norvegicus (Rat).